The primary structure comprises 330 residues: Aspartate--ammonia ligase (330 aa).

The protein belongs to the class-II aminoacyl-tRNA synthetase family. AsnA subfamily.

The protein localises to the cytoplasm. It carries out the reaction L-aspartate + NH4(+) + ATP = L-asparagine + AMP + diphosphate + H(+). It functions in the pathway amino-acid biosynthesis; L-asparagine biosynthesis; L-asparagine from L-aspartate (ammonia route): step 1/1. The chain is Aspartate--ammonia ligase from Escherichia fergusonii (strain ATCC 35469 / DSM 13698 / CCUG 18766 / IAM 14443 / JCM 21226 / LMG 7866 / NBRC 102419 / NCTC 12128 / CDC 0568-73).